The chain runs to 90 residues: Small ribosomal subunit protein uS15c (90 aa).

As to quaternary structure, component of the chloroplast small ribosomal subunit (SSU). Mature 70S chloroplast ribosomes of higher plants consist of a small (30S) and a large (50S) subunit. The 30S small subunit contains 1 molecule of ribosomal RNA (16S rRNA) and 24 different proteins. The 50S large subunit contains 3 rRNA molecules (23S, 5S and 4.5S rRNA) and 33 different proteins.

It localises to the plastid. The protein localises to the chloroplast. Component of the chloroplast ribosome (chloro-ribosome), a dedicated translation machinery responsible for the synthesis of chloroplast genome-encoded proteins, including proteins of the transcription and translation machinery and components of the photosynthetic apparatus. The polypeptide is Small ribosomal subunit protein uS15c (rps15) (Spinacia oleracea (Spinach)).